The sequence spans 293 residues: Proline iminopeptidase (293 aa).

The 250-residue stretch at Pro28–Lys277 folds into the AB hydrolase-1 domain. The active-site Nucleophile is the Ser105. Residue Asp244 is part of the active site. His271 functions as the Proton donor in the catalytic mechanism.

It belongs to the peptidase S33 family.

Its subcellular location is the cell envelope. It carries out the reaction Release of N-terminal proline from a peptide.. Releases the N-terminal proline from various substrates. The protein is Proline iminopeptidase of Lactobacillus acidophilus (strain ATCC 700396 / NCK56 / N2 / NCFM).